The following is a 191-amino-acid chain: Reticulon-like protein B15 (191 aa).

The Reticulon domain occupies V13–E191. 3 helical membrane passes run I23–E43, V47–F67, and V122–L142.

It localises to the endoplasmic reticulum membrane. The protein is Reticulon-like protein B15 (RTNLB15) of Arabidopsis thaliana (Mouse-ear cress).